Reading from the N-terminus, the 130-residue chain is Ribosome-binding factor A (130 aa).

This sequence belongs to the RbfA family. In terms of assembly, monomer. Binds 30S ribosomal subunits, but not 50S ribosomal subunits or 70S ribosomes.

It is found in the cytoplasm. In terms of biological role, one of several proteins that assist in the late maturation steps of the functional core of the 30S ribosomal subunit. Associates with free 30S ribosomal subunits (but not with 30S subunits that are part of 70S ribosomes or polysomes). Required for efficient processing of 16S rRNA. May interact with the 5'-terminal helix region of 16S rRNA. The chain is Ribosome-binding factor A from Methylibium petroleiphilum (strain ATCC BAA-1232 / LMG 22953 / PM1).